We begin with the raw amino-acid sequence, 608 residues long: UvrABC system protein C (608 aa).

Residues 13-91 (HDAGVYRMYD…IKTYQPRYNV (79 aa)) enclose the GIY-YIG domain. In terms of domain architecture, UVR spans 201–236 (QQVLEHLIHKMEQASLALDFEEAARIRDQIQAVRAV).

The protein belongs to the UvrC family. Interacts with UvrB in an incision complex.

The protein resides in the cytoplasm. The UvrABC repair system catalyzes the recognition and processing of DNA lesions. UvrC both incises the 5' and 3' sides of the lesion. The N-terminal half is responsible for the 3' incision and the C-terminal half is responsible for the 5' incision. The polypeptide is UvrABC system protein C (Pasteurella multocida (strain Pm70)).